A 481-amino-acid chain; its full sequence is MSVVVGDRSESTLMRSDYKAPPSQAIPKARLQVWFFRVCSCILVWTCLIQLFWHSQIFTGLTNHISRFSLPVQSVPLPPPLPPRNYTSNGILLVSCNGGLNQMRAAICDMVTVARLLNLTLVVPELDKKSFWADTSDFEDIFDIKHFIDSLRDEVRIIRRLPKRYSKKYGFKLFEMPPVSWSNDKYYLQQVLPRFSKRKVIHFVRSDTRLANNGLSLDLQRLRCRVNFQGLRFTPRIEALGSKLVRILQQRGSFVALHLRYEMDMLAFSGCTHGCTDEEAEELKKMRYAYPWWREKEIVSEERRVQGLCPLTPEEAVLVLKALGFQKDTQIYIAAGEIFGGAKRLALLKESFPRIVKKEMLLDPTELQQFQNHSSQMAALDFIVSVASNTFIPTYYGNMAKVVEGHRRYLGFKKTILLDRKRLVELLDLHNNKTLSWDQFAVAVKDAHQGRRMGEPTHRKVISVRPKEEDYFYANPQECIS.

Residues 33 to 55 (VWFFRVCSCILVWTCLIQLFWHS) form a helical; Signal-anchor for type II membrane protein membrane-spanning segment. N-linked (GlcNAc...) asparagine glycans are attached at residues N85 and N118. 258-260 (HLR) serves as a coordination point for substrate. N-linked (GlcNAc...) asparagine glycans are attached at residues N372 and N432.

The protein belongs to the glycosyltransferase GT106 family.

It is found in the golgi apparatus membrane. The catalysed reaction is alpha-D-galacturonosyl-[(1-&gt;2)-alpha-L-rhamnosyl-(1-&gt;4)-alpha-D-galacturonosyl](n) + UDP-beta-L-rhamnose = [(1-&gt;2)-alpha-L-rhamnosyl-(1-&gt;4)-alpha-D-galacturonosyl](n+1) + UDP + H(+). It participates in glycan metabolism; pectin biosynthesis. In terms of biological role, glycosyltransferase involved in the formation of rhamnogalacturonan I (RG-I) oligosaccharides in the seed coat mucilage, which is a specialized cell wall with abundant RG-I. Transfers the rhamnose residue from UDP-beta-L-rhamnose to RG-I oligosaccharides. The protein is Rhamnogalacturonan I rhamnosyltransferase 4 of Arabidopsis thaliana (Mouse-ear cress).